The following is a 183-amino-acid chain: Archaemetzincin (183 aa).

A Zn(2+)-binding site is contributed by H131. E132 acts as the Proton acceptor in catalysis. Residues H135, H141, C142, C147, C166, and C169 each coordinate Zn(2+).

Belongs to the peptidase M54 family. As to quaternary structure, monomer. The cofactor is Zn(2+).

Functionally, probable zinc metalloprotease whose natural substrate is unknown. This chain is Archaemetzincin, found in Saccharolobus islandicus (strain Y.N.15.51 / Yellowstone #2) (Sulfolobus islandicus).